The sequence spans 87 residues: Small polypeptide ROTUNDIFOLIA LIKE 2 (87 aa).

Residues 19–35 traverse the membrane as a helical segment; that stretch reads LIPHTSHYILQLVYLHL. The interval 56–87 is required for DVL/RTFL small polypeptide activity; it reads GQMGRLNRAFREKRARFYIFRRCVIMLLRWSD.

This sequence belongs to the DVL/RTFL small polypeptides family.

Its subcellular location is the cell membrane. Small polypeptide acting as a regulatory molecule which coordinates cellular responses required for differentiation, growth and development, probably by restricting polar cell proliferation in lateral organs. The sequence is that of Small polypeptide ROTUNDIFOLIA LIKE 2 from Oryza sativa subsp. japonica (Rice).